The primary structure comprises 624 residues: Kelch-like protein diablo (624 aa).

The tract at residues 1–55 (MGDPLLPGSTGLGSGSATAATGGSVTAGSGLGNGGTGGAERPPSPARLTHTSEKH) is disordered. Positions 15-28 (GSATAATGGSVTAG) are enriched in low complexity. Positions 29–38 (SGLGNGGTGG) are enriched in gly residues. One can recognise a BTB domain in the interval 73-140 (CDVVLNVGGR…CYTAHIIVEE (68 aa)). The 103-residue stretch at 175–277 (CLGIRAFADT…SPKFLVGTVG (103 aa)) folds into the BACK domain. Kelch repeat units lie at residues 324–370 (VLFA…VLND), 372–418 (LYAV…VLDG), 419–465 (FLYA…VLSG), 467–512 (LYAI…VFNN), 514–559 (IYAV…VVNG), and 560–606 (QLYA…VMRA).

Its pathway is protein modification; protein ubiquitination. Its function is as follows. Probable substrate-specific adapter of an E3 ubiquitin-protein ligase complex which mediates the ubiquitination and subsequent proteasomal degradation of target proteins. May have a role in synapse differentiation and growth. The sequence is that of Kelch-like protein diablo from Drosophila grimshawi (Hawaiian fruit fly).